The sequence spans 357 residues: Protein RecA (357 aa).

Position 67-74 (67-74 (GPESSGKT)) interacts with ATP.

This sequence belongs to the RecA family.

The protein localises to the cytoplasm. Can catalyze the hydrolysis of ATP in the presence of single-stranded DNA, the ATP-dependent uptake of single-stranded DNA by duplex DNA, and the ATP-dependent hybridization of homologous single-stranded DNAs. It interacts with LexA causing its activation and leading to its autocatalytic cleavage. This Shewanella oneidensis (strain ATCC 700550 / JCM 31522 / CIP 106686 / LMG 19005 / NCIMB 14063 / MR-1) protein is Protein RecA.